A 148-amino-acid polypeptide reads, in one-letter code: Deoxyuridine 5'-triphosphate nucleotidohydrolase (148 aa).

Residues 67 to 69, N80, 84 to 86, and M94 each bind substrate; these read RSG and LID.

The protein belongs to the dUTPase family. Mg(2+) serves as cofactor.

It carries out the reaction dUTP + H2O = dUMP + diphosphate + H(+). It functions in the pathway pyrimidine metabolism; dUMP biosynthesis; dUMP from dCTP (dUTP route): step 2/2. In terms of biological role, this enzyme is involved in nucleotide metabolism: it produces dUMP, the immediate precursor of thymidine nucleotides and it decreases the intracellular concentration of dUTP so that uracil cannot be incorporated into DNA. In Burkholderia cenocepacia (strain ATCC BAA-245 / DSM 16553 / LMG 16656 / NCTC 13227 / J2315 / CF5610) (Burkholderia cepacia (strain J2315)), this protein is Deoxyuridine 5'-triphosphate nucleotidohydrolase.